A 251-amino-acid polypeptide reads, in one-letter code: Imidazole glycerol phosphate synthase subunit HisF (251 aa).

Residues D11 and D130 contribute to the active site.

The protein belongs to the HisA/HisF family. Heterodimer of HisH and HisF.

It localises to the cytoplasm. The catalysed reaction is 5-[(5-phospho-1-deoxy-D-ribulos-1-ylimino)methylamino]-1-(5-phospho-beta-D-ribosyl)imidazole-4-carboxamide + L-glutamine = D-erythro-1-(imidazol-4-yl)glycerol 3-phosphate + 5-amino-1-(5-phospho-beta-D-ribosyl)imidazole-4-carboxamide + L-glutamate + H(+). The protein operates within amino-acid biosynthesis; L-histidine biosynthesis; L-histidine from 5-phospho-alpha-D-ribose 1-diphosphate: step 5/9. Its function is as follows. IGPS catalyzes the conversion of PRFAR and glutamine to IGP, AICAR and glutamate. The HisF subunit catalyzes the cyclization activity that produces IGP and AICAR from PRFAR using the ammonia provided by the HisH subunit. This is Imidazole glycerol phosphate synthase subunit HisF from Pelodictyon phaeoclathratiforme (strain DSM 5477 / BU-1).